The primary structure comprises 496 residues: Cytochrome f, chloroplastic (496 aa).

A chloroplast-targeting transit peptide spans 1–149; that stretch reads MASLQTPVMV…VGAAAGSANA (149 aa). 4 residues coordinate heme: tyrosine 150, cysteine 170, cysteine 173, and histidine 174. A helical membrane pass occupies residues 462–481; it reads VQAFLFFSFTVLATQTLLVV.

It belongs to the cytochrome f family. In terms of assembly, interacts with plastocyanin and Rieske iron-sulfur protein. Requires heme as cofactor.

It localises to the plastid. Its subcellular location is the chloroplast thylakoid membrane. Its function is as follows. Translocates protons across the thylakoid membrane and transfers electrons from photosystem II to photosystem I. It receives electrons from the Rieske iron-sulfur protein and passes them to plastocyanin. This is Cytochrome f, chloroplastic (petA) from Euglena gracilis.